We begin with the raw amino-acid sequence, 266 residues long: Glucosamine-6-phosphate deaminase (266 aa).

Asp-72 serves as the catalytic Proton acceptor; for enolization step. Asp-141 acts as the For ring-opening step in catalysis. Catalysis depends on His-143, which acts as the Proton acceptor; for ring-opening step. The For ring-opening step role is filled by Glu-148.

Belongs to the glucosamine/galactosamine-6-phosphate isomerase family. NagB subfamily. As to quaternary structure, homohexamer.

The enzyme catalyses alpha-D-glucosamine 6-phosphate + H2O = beta-D-fructose 6-phosphate + NH4(+). It functions in the pathway amino-sugar metabolism; N-acetylneuraminate degradation; D-fructose 6-phosphate from N-acetylneuraminate: step 5/5. Its activity is regulated as follows. Allosterically activated by N-acetylglucosamine 6-phosphate (GlcNAc6P). Its function is as follows. Catalyzes the reversible isomerization-deamination of glucosamine 6-phosphate (GlcN6P) to form fructose 6-phosphate (Fru6P) and ammonium ion. This Salmonella typhimurium (strain LT2 / SGSC1412 / ATCC 700720) protein is Glucosamine-6-phosphate deaminase.